Consider the following 115-residue polypeptide: Large ribosomal subunit protein bL20c (115 aa).

Belongs to the bacterial ribosomal protein bL20 family.

It is found in the plastid. The protein resides in the chloroplast. Its function is as follows. Binds directly to 23S ribosomal RNA and is necessary for the in vitro assembly process of the 50S ribosomal subunit. It is not involved in the protein synthesizing functions of that subunit. This is Large ribosomal subunit protein bL20c from Pyropia yezoensis (Susabi-nori).